We begin with the raw amino-acid sequence, 2115 residues long: Nuclear mitotic apparatus protein 1 (2115 aa).

Residues 1-212 (MTLHATRGAA…SPMGDILQTP (212 aa)) form a head (Globular) region. S162 is subject to Phosphoserine. T163 is modified (phosphothreonine). 2 positions are modified to phosphoserine: S169 and S203. At T211 the chain carries Phosphothreonine. Positions 213-1699 (QFQMRRLKKQ…ADQQLRDLGK (1487 aa)) form a coiled coil. S271 is modified (phosphoserine). At K379 the chain carries N6-acetyllysine. Residues S388 and S395 each carry the phosphoserine modification. Over residues 549-560 (LRHQVEQLSSSL) the composition is skewed to low complexity. Disordered stretches follow at residues 549 to 593 (LRHQ…EERE) and 746 to 766 (LVEQ…GRKG). A compositionally biased stretch (basic and acidic residues) spans 561–581 (KQKEQQLKEVAEKQEATRQDH). S820 carries the phosphoserine modification. At K891 the chain carries N6-acetyllysine. Basic and acidic residues-rich tracts occupy residues 926–950 (AGEQ…RQPE) and 996–1013 (QEER…TQER). Disordered regions lie at residues 926–958 (AGEQ…QQGR) and 988–1013 (LMES…TQER). T1047 bears the Phosphothreonine; by PLK1 mark. The span at 1090-1102 (LKEQLAKKEKEHA) shows a compositional bias: basic and acidic residues. 2 disordered regions span residues 1090 to 1225 (LKEQ…RKNS) and 1275 to 1296 (ETAS…EVQS). Low complexity-rich tracts occupy residues 1103–1112 (SGSGAQSEAA) and 1133–1142 (EQQCQKQQEQ). Over residues 1145-1163 (SLERSLEAERASRAERDSA) the composition is skewed to basic and acidic residues. Residue S1187 is modified to Phosphoserine. Over residues 1198–1224 (KVQDHSKAEDEWKAQVARGRQEAERKN) the composition is skewed to basic and acidic residues. At S1225 the chain carries Phosphoserine. The span at 1283–1296 (AAERSSALREEVQS) shows a compositional bias: basic and acidic residues. K1511 carries the N6-acetyllysine modification. Phosphoserine is present on S1601. Residue K1699 forms a Glycyl lysine isopeptide (Lys-Gly) (interchain with G-Cter in SUMO2) linkage. The interval 1699–1876 (KFQVATDALK…NSALLSLPGY (178 aa)) is membrane-binding domain 1. The tail (Globular) stretch occupies residues 1700–2115 (FQVATDALKS…TPRAKGKAKH (416 aa)). Phosphoserine is present on residues S1721, S1724, and S1728. A disordered region spans residues 1734–1761 (PLSITSKLPRTQPDGTSVPGEPASPISQ). Positions 1735-1748 (LSITSKLPRTQPDG) are enriched in polar residues. The Tankyrase-binding domain motif lies at 1742–1748 (PRTQPDG). Phosphoserine occurs at positions 1757 and 1760. A Glycyl lysine isopeptide (Lys-Gly) (interchain with G-Cter in SUMO1); alternate cross-link involves residue K1766. K1766 is covalently cross-linked (Glycyl lysine isopeptide (Lys-Gly) (interchain with G-Cter in SUMO2); alternate). A phosphoserine; by PLK1 mark is found at S1769 and S1772. Residue Y1774 is modified to Phosphotyrosine. The residue at position 1776 (T1776) is a Phosphothreonine. Residue S1788 is modified to Phosphoserine. The interval 1788–1810 (SSLDSLGDVFLDSGRKTRSARRR) is 4.1-binding domain. Position 1789 is a phosphoserine; by PLK1 (S1789). Phosphoserine is present on residues S1792 and S1800. Phosphothreonine is present on T1804. Residue K1822 forms a Glycyl lysine isopeptide (Lys-Gly) (interchain with G-Cter in SUMO2) linkage. Disordered stretches follow at residues 1826-1901 (EEPD…GRNS) and 1955-2115 (EMKT…KAKH). Phosphoserine is present on residues S1830 and S1833. The segment covering 1830–1857 (SANSSFYSTRSAPASQASLRATSSTQSL) has biased composition (polar residues). S1834 is modified (phosphoserine; by PLK1). Y1836 carries the phosphotyrosine modification. S1840 is subject to Phosphoserine. Position 1844 is a phosphoserine; alternate (S1844). S1844 is a glycosylation site (O-linked (GlcNAc) serine; alternate). Phosphoserine occurs at positions 1862 and 1887. The segment covering 1879–1891 (TTRSSARRSQAGV) has biased composition (polar residues). The segment at 1882 to 1985 (SSARRSQAGV…AEGTGITTRQ (104 aa)) is tubulin-binding domain. Positions 1892 to 1926 (SSGAPPGRNSFYMGTCQDEPEQLDDWNRIAELQQR) are GPSM2-binding domain. The span at 1955–1966 (EMKTGDPQETLR) shows a compositional bias: basic and acidic residues. S1969 is subject to Phosphoserine. The membrane-binding domain 2 stretch occupies residues 1981–2060 (ITTRQQRKRV…SILNTPKKLG (80 aa)). The Nuclear localization signal signature appears at 1984-1989 (RQQRKR). Position 1991 is a phosphoserine (S1991). Phosphothreonine is present on T2000. S2003 bears the Phosphoserine mark. At T2015 the chain carries Phosphothreonine; by CDK1. Over residues 2015–2032 (TPRDRHEGRKQSTTEAQK) the composition is skewed to basic and acidic residues. Residue S2047 is modified to Phosphoserine. Residue T2055 is modified to Phosphothreonine; by CDK1. S2062 and S2077 each carry phosphoserine. S2087 is subject to Phosphoserine; by CDK1. Positions 2089–2108 (RIATTTASAATAAAIGATPR) are enriched in low complexity. At T2106 the chain carries Phosphothreonine; by CDK1.

In terms of assembly, homodimer. Also forms multiarm oligomers by association of C-terminal tail domains, oligomers may further assemble to form a hexagonal nuclear lattice-like network. Associates with the dynein-dynactin complex; this association promotes the transport and accumulation of NUMA1 at the mitotic spindle poles that is inhibited by the BRISC complex in a PLK1-dependent manner. Part of a spindle orientation complex at least composed of GNAI1, GPSM2 and NUMA1. Interacts (via C-terminus) with microtubules (MTs); this interaction is direct and promotes both MT bundle formation and stability in a dynein-dynactin complex- and CDK1-independent manner. Interacts with EPB41 and EPB41L2; these interactions are negatively regulated by CDK1 during metaphase and are important for anaphase-specific localization of NUMA1 in symmetrically dividing cells. Interacts (via C-terminus) with GPSM2 (via TPR repeats); this interaction is direct, prevented by competitive binding of INSC, is inhibited in a PLK1-dependent manner, blocks the association of NUMA1 with MTs and inhibits NUMA1-induced MT bundle formation, prevents the association of NUMA1 with SPAG5, induces mitotic spindle pole localization of GPSM2, both metaphase cell cortex localization of NUMA1 and mitotic spindle organization. Does not interact with GPSM2 during anaphase. Interacts (via C-terminus) with the nuclear importin alpha/importin beta receptor; this interaction is inhibited by RanGTP. Interacts (via C-terminus) with KPNB1; this interaction is inhibited by RanGTP and the BRISC complex. Interacts with ABRAXAS2 and the BRISC complex; these interactions regulate mitotic spindle assembly. Interacts (via N-terminal end of the coiled-coil domain) with RAE1; this interaction promotes mitotic spindle formation. Interacts (via C-terminus) with SPAG5 (via C-terminus); this interaction promotes the recruitment of SPAG5 to the MTs at spindle poles in a dynein-dynactin-dependent manner and regulates mitotic spindle organization and proper chromosome alignment during mitosis. Interacts with TNKS; this interaction occurs at the onset of mitosis. Interacts with TNKS2. Interacts with tubulin. Interacts with KHDC3L (via C-terminus). Phosphorylation and dephosphorylation on Thr-2055 regulates the extent of cortical NUMA1 and the dynein-dynactin complex localization during mitotic metaphase and anaphase. In metaphase, phosphorylation on Thr-2055 occurs in a kinase CDK1-dependent manner; this phosphorylation maintains low levels of cortical dynein-dynactin complex at metaphase, and hence proper spindle positioning. In anaphase, dephosphorylated on Thr-2055 by phosphatase PPP2CA; this dephosphorylation stimulates its membrane association and with the dynein-dynactin complex its enrichment at the cell cortex, and hence robust spindle elongation. Probably also phosphorylated on Thr-2015 and Ser-2087 by CDK1; these phosphorylations may regulate its cell cortex recruitment during metaphase and anaphase. Phosphorylated on Thr-1047, Ser-1769, Ser-1772, Ser-1789 and Ser-1834 by PLK1; these phosphorylations induce cortical dynein-dynactin complex dissociation from the NUMA1-GPSM2 complex and negatively regulates cortical dynein-dynactin complex localization. Post-translationally, ADP-ribosylated by TNKS at the onset of mitosis; ADP-ribosylation is not required for its localization to spindle poles. In terms of processing, O-glycosylated during cytokinesis at sites identical or close to phosphorylation sites, this interferes with the phosphorylation status. Ubiquitinated with 'Lys-63'-linked polyubiquitin chains. Deubiquitination by the BRISC complex is important for the incorporation of NUMA1 into mitotic spindle poles and normal spindle pole function, probably by modulating interactions between NUMA1, dynein-dynactin complex and importin-beta.

The protein resides in the nucleus. It is found in the nucleoplasm. The protein localises to the nucleus matrix. Its subcellular location is the chromosome. It localises to the cytoplasm. The protein resides in the cytoskeleton. It is found in the microtubule organizing center. The protein localises to the centrosome. Its subcellular location is the spindle pole. It localises to the cell cortex. The protein resides in the cell membrane. It is found in the lateral cell membrane. The protein localises to the cytosol. Microtubule (MT)-binding protein that plays a role in the formation and maintenance of the spindle poles and the alignement and the segregation of chromosomes during mitotic cell division. Functions to tether the minus ends of MTs at the spindle poles, which is critical for the establishment and maintenance of the spindle poles. Plays a role in the establishment of the mitotic spindle orientation during metaphase and elongation during anaphase in a dynein-dynactin-dependent manner. In metaphase, part of a ternary complex composed of GPSM2 and G(i) alpha proteins, that regulates the recruitment and anchorage of the dynein-dynactin complex in the mitotic cell cortex regions situated above the two spindle poles, and hence regulates the correct oritentation of the mitotic spindle. During anaphase, mediates the recruitment and accumulation of the dynein-dynactin complex at the cell membrane of the polar cortical region through direct association with phosphatidylinositol 4,5-bisphosphate (PI(4,5)P2), and hence participates in the regulation of the spindle elongation and chromosome segregation. Also binds to other polyanionic phosphoinositides, such as phosphatidylinositol 3-phosphate (PIP), lysophosphatidic acid (LPA) and phosphatidylinositol triphosphate (PIP3), in vitro. Also required for proper orientation of the mitotic spindle during asymmetric cell divisions. Plays a role in mitotic MT aster assembly. Involved in anastral spindle assembly. Positively regulates TNKS protein localization to spindle poles in mitosis. Highly abundant component of the nuclear matrix where it may serve a non-mitotic structural role, occupies the majority of the nuclear volume. Required for epidermal differentiation and hair follicle morphogenesis. In Homo sapiens (Human), this protein is Nuclear mitotic apparatus protein 1.